We begin with the raw amino-acid sequence, 236 residues long: 2-C-methyl-D-erythritol 4-phosphate cytidylyltransferase (236 aa).

Belongs to the IspD/TarI cytidylyltransferase family. IspD subfamily. Homodimer.

It catalyses the reaction 2-C-methyl-D-erythritol 4-phosphate + CTP + H(+) = 4-CDP-2-C-methyl-D-erythritol + diphosphate. It functions in the pathway isoprenoid biosynthesis; isopentenyl diphosphate biosynthesis via DXP pathway; isopentenyl diphosphate from 1-deoxy-D-xylulose 5-phosphate: step 2/6. Functionally, catalyzes the formation of 4-diphosphocytidyl-2-C-methyl-D-erythritol from CTP and 2-C-methyl-D-erythritol 4-phosphate (MEP). This Escherichia fergusonii (strain ATCC 35469 / DSM 13698 / CCUG 18766 / IAM 14443 / JCM 21226 / LMG 7866 / NBRC 102419 / NCTC 12128 / CDC 0568-73) protein is 2-C-methyl-D-erythritol 4-phosphate cytidylyltransferase.